A 260-amino-acid polypeptide reads, in one-letter code: UPF0246 protein BURPS668_1321 (260 aa).

It belongs to the UPF0246 family.

In Burkholderia pseudomallei (strain 668), this protein is UPF0246 protein BURPS668_1321.